A 175-amino-acid chain; its full sequence is Alpha-crystallin B chain (175 aa).

M1 carries the post-translational modification N-acetylmethionine. S19 is subject to Phosphoserine. Residue S41 is glycosylated (O-linked (GlcNAc) serine). 2 positions are modified to phosphoserine: S45 and S59. In terms of domain architecture, sHSP spans 56–164; sequence RAPSWIDTGL…PERTIPITRE (109 aa). H83 is a binding site for Zn(2+). An N6-acetyllysine modification is found at K92. Zn(2+) contacts are provided by H104, E106, H111, and H119. The tract at residues 142–175 is disordered; that stretch reads VLTVNGPRRQASGPERTIPITREEKPAVTAAPKK. N6-acetyllysine is present on K166. T170 is a glycosylation site (O-linked (GlcNAc) threonine).

The protein belongs to the small heat shock protein (HSP20) family. As to quaternary structure, heteromer composed of three CRYAA and one CRYAB subunits. Aggregates with homologous proteins, including the small heat shock protein HSPB1, to form large heteromeric complexes. Inter-subunit bridging via zinc ions enhances stability, which is crucial as there is no protein turn over in the lens. Interacts with HSPBAP1 and TTN/titin. Interacts with TMEM109; in the cellular response to DNA damage. Interacts with DES; binds rapidly during early stages of DES filament assembly and a reduced binding seen in the later stages. Interacts with TMED10; the interaction mediates the translocation from the cytoplasm into the ERGIC (endoplasmic reticulum-Golgi intermediate compartment) and thereby secretion. Interacts with ATP6V1A and with MTOR, forming a ternary complex.

It is found in the cytoplasm. It localises to the nucleus. Its subcellular location is the secreted. The protein resides in the lysosome. Functionally, may contribute to the transparency and refractive index of the lens. Has chaperone-like activity, preventing aggregation of various proteins under a wide range of stress conditions. In lens epithelial cells, stabilizes the ATP6V1A protein, preventing its degradation by the proteasome. This Sus scrofa (Pig) protein is Alpha-crystallin B chain (CRYAB).